We begin with the raw amino-acid sequence, 87 residues long: MTTKMVSSHRLLTLMVFALLLIPMISGQSSKCTKGCTSTPECNIKCMKKGGGHCQAYIGRSHGRLAIENYCCCNNYSNSPISSPVMN.

A signal peptide spans 1 to 27 (MTTKMVSSHRLLTLMVFALLLIPMISG). 4 cysteine pairs are disulfide-bonded: Cys32–Cys73, Cys36–Cys54, Cys42–Cys71, and Cys46–Cys72.

Belongs to the DEFL family.

The protein resides in the secreted. The sequence is that of Putative defensin-like protein 84 from Arabidopsis thaliana (Mouse-ear cress).